We begin with the raw amino-acid sequence, 345 residues long: Protein sdf-9 (345 aa).

The Tyrosine-protein phosphatase domain maps to 33-284 (NRNRVVKIVP…SFIYEAVLDY (252 aa)).

This sequence belongs to the protein-tyrosine phosphatase family. As to expression, expressed in the 2 embryonic head hypodermal cells XXXL/R.

Its subcellular location is the cytoplasm. It is found in the cell membrane. In terms of biological role, together with eak-4 and phosphatase eak-6, negatively regulates dauer larva formation downstream of insulin-like receptor daf-2 and in parallel of age-1, pdk-1 and akt-1. In Caenorhabditis elegans, this protein is Protein sdf-9.